A 1402-amino-acid polypeptide reads, in one-letter code: DNA-directed RNA polymerase subunit beta' (1402 aa).

The Zn(2+) site is built by Cys-72, Cys-74, Cys-87, and Cys-90. Positions 463, 465, and 467 each coordinate Mg(2+). Zn(2+)-binding residues include Cys-811, Cys-885, Cys-892, and Cys-895.

Belongs to the RNA polymerase beta' chain family. In terms of assembly, the RNAP catalytic core consists of 2 alpha, 1 beta, 1 beta' and 1 omega subunit. When a sigma factor is associated with the core the holoenzyme is formed, which can initiate transcription. Requires Mg(2+) as cofactor. Zn(2+) serves as cofactor.

The enzyme catalyses RNA(n) + a ribonucleoside 5'-triphosphate = RNA(n+1) + diphosphate. In terms of biological role, DNA-dependent RNA polymerase catalyzes the transcription of DNA into RNA using the four ribonucleoside triphosphates as substrates. This chain is DNA-directed RNA polymerase subunit beta', found in Paracoccus denitrificans (strain Pd 1222).